The sequence spans 291 residues: UTP--glucose-1-phosphate uridylyltransferase (291 aa).

This sequence belongs to the UDPGP type 2 family.

It carries out the reaction alpha-D-glucose 1-phosphate + UTP + H(+) = UDP-alpha-D-glucose + diphosphate. May play a role in stationary phase survival. This is UTP--glucose-1-phosphate uridylyltransferase (galU) from Mycoplasma pneumoniae (strain ATCC 29342 / M129 / Subtype 1) (Mycoplasmoides pneumoniae).